The primary structure comprises 399 residues: MRFREQFLGGSAAMPGATLQRACRLLVAVCALHLGVTLVYYLSGRDLSRLPQLVGVSSTLQGGTNGAAASKQPPGEQRPRGARPPPPLGVSPKPRPGLDSSPGAASGPGLKSNLSSLPVPTTTGLLSLPACPEESPLLVGPMLIDFNIAVDLELLAKKNPEIKTGGRYSPKDCVSPHKVAIIIPFRNRQEHLKYWLYYLHPILQRQQLDYGIYVINQAGDTMFNRAKLLNIGFQEALKDYDYNCFVFSDVDLIPMDDRNAYRCFSQPRHISVAMDKFGFSLPYVQYFGGVSALSKQQFLAINGFPNNYWGWGGEDDDIFNRLVHKGMSISRPNAVVGRCRMIRHSRDKKNEPNPQRFDRIAHTKETMRFDGLNSLTYKVLDVQRYPLYTQITVDIGTPR.

Residues 1–24 (MRFREQFLGGSAAMPGATLQRACR) lie on the Cytoplasmic side of the membrane. Residues 25-44 (LLVAVCALHLGVTLVYYLSG) traverse the membrane as a helical; Signal-anchor for type II membrane protein segment. Over 45–399 (RDLSRLPQLV…QITVDIGTPR (355 aa)) the chain is Lumenal. A disordered region spans residues 61-113 (QGGTNGAAASKQPPGEQRPRGARPPPPLGVSPKPRPGLDSSPGAASGPGLKSN). The span at 82-95 (ARPPPPLGVSPKPR) shows a compositional bias: pro residues. Residue Asn-113 is glycosylated (N-linked (GlcNAc...) asparagine). Cys-131 and Cys-173 are disulfide-bonded. Residues 184–188 (PFRNR), 223–225 (FNR), 250–251 (VD), and Trp-311 each bind UDP-alpha-D-galactose. Cysteines 244 and 263 form a disulfide. A Mn(2+)-binding site is contributed by Asp-251. 313-316 (GEDD) lines the N-acetyl-D-glucosamine pocket. Residue His-344 coordinates Mn(2+). A UDP-alpha-D-galactose-binding site is contributed by 344–346 (HSR). N-acetyl-D-glucosamine is bound at residue Arg-356.

Belongs to the glycosyltransferase 7 family. In terms of assembly, homodimer; and heterodimer with alpha-lactalbumin to form lactose synthase. Interacts (via N-terminal cytoplasmic domain) with UBE2Q1 (via N-terminus); the interaction is direct. It depends on Mn(2+) as a cofactor. In terms of processing, the soluble form derives from the membrane forms by proteolytic processing.

It localises to the golgi apparatus. The protein localises to the golgi stack membrane. It is found in the cell membrane. Its subcellular location is the cell surface. The protein resides in the cell projection. It localises to the filopodium. The protein localises to the secreted. The catalysed reaction is D-glucose + UDP-alpha-D-galactose = lactose + UDP + H(+). The enzyme catalyses an N-acetyl-beta-D-glucosaminyl derivative + UDP-alpha-D-galactose = a beta-D-galactosyl-(1-&gt;4)-N-acetyl-beta-D-glucosaminyl derivative + UDP + H(+). It catalyses the reaction N-acetyl-D-glucosamine + UDP-alpha-D-galactose = beta-D-galactosyl-(1-&gt;4)-N-acetyl-D-glucosamine + UDP + H(+). It carries out the reaction a beta-D-GlcNAc-(1-&gt;3)-beta-D-Gal-(1-&gt;4)-beta-D-Glc-(1&lt;-&gt;1)-Cer(d18:1(4E)) + UDP-alpha-D-galactose = a neolactoside nLc4Cer(d18:1(4E)) + UDP + H(+). The catalysed reaction is a beta-D-glucosylceramide + UDP-alpha-D-galactose = a beta-D-galactosyl-(1-&gt;4)-beta-D-glucosyl-(1&lt;-&gt;1)-ceramide + UDP + H(+). The enzyme catalyses a neolactoside IV(3)-beta-GlcNAc-nLc4Cer + UDP-alpha-D-galactose = a neolactoside nLc6Cer + UDP + H(+). It participates in protein modification; protein glycosylation. The Golgi complex form catalyzes the production of lactose in the lactating mammary gland and could also be responsible for the synthesis of complex-type N-linked oligosaccharides in many glycoproteins as well as the carbohydrate moieties of glycolipids. In terms of biological role, the cell surface form functions as a recognition molecule during a variety of cell to cell and cell to matrix interactions, as those occurring during development and egg fertilization, by binding to specific oligosaccharide ligands on opposing cells or in the extracellular matrix. The secreted form is responsible for the synthesis of complex-type to N-linked oligosaccharides in many glycoproteins as well as the carbohydrate moieties of glycolipids. This is Beta-1,4-galactosyltransferase 1 from Mus musculus (Mouse).